A 312-amino-acid chain; its full sequence is Malate dehydrogenase (312 aa).

NAD(+) contacts are provided by residues glycine 7 to glycine 13 and aspartate 34. Residues arginine 81 and arginine 87 each coordinate substrate. Residues asparagine 94 and isoleucine 117–asparagine 119 each bind NAD(+). The substrate site is built by asparagine 119 and arginine 153. Histidine 177 serves as the catalytic Proton acceptor. Methionine 227 is an NAD(+) binding site.

The protein belongs to the LDH/MDH superfamily. MDH type 1 family. In terms of assembly, homodimer.

The enzyme catalyses (S)-malate + NAD(+) = oxaloacetate + NADH + H(+). In terms of biological role, catalyzes the reversible oxidation of malate to oxaloacetate. The polypeptide is Malate dehydrogenase (Cronobacter sakazakii (strain ATCC BAA-894) (Enterobacter sakazakii)).